The sequence spans 956 residues: Plasma membrane ATPase 3 (956 aa).

Topologically, residues 1-65 (MGEKPEVLDA…EKKESKFSKF (65 aa)) are cytoplasmic. The helical transmembrane segment at 66-85 (LGFMWNPLSWVMEAAAIMAI) threads the bilayer. The Extracellular segment spans residues 86–97 (ALANGGGKPPDW). Residues 98–118 (QDFVGIITLLIINSTISFIEE) traverse the membrane as a helical segment. The Cytoplasmic segment spans residues 119–247 (NNAGNAAAAL…GHFQKVLTAI (129 aa)). The helical transmembrane segment at 248-268 (GNFCICSIAVGMIIEIIVMYP) threads the bilayer. Topologically, residues 269 to 278 (IQHRKYRPGI) are extracellular. Residues 279 to 300 (DNLLVLLIGGIPIAMPTVLSVT) form a helical membrane-spanning segment. The Cytoplasmic segment spans residues 301-647 (MAIGSHRLAQ…TSRAIFQRMK (347 aa)). Catalysis depends on aspartate 333, which acts as the 4-aspartylphosphate intermediate. Aspartate 592 and aspartate 596 together coordinate Mg(2+). Residues 648–669 (NYTIYAVSITIRIVLGFMLLAL) traverse the membrane as a helical segment. The Extracellular portion of the chain corresponds to 670–674 (IWQFD). The helical transmembrane segment at 675 to 697 (FPPFMVLIIAILNDGTIMTISKD) threads the bilayer. Over 698-713 (RVKPSPLPDSWKLAEI) the chain is Cytoplasmic. A helical membrane pass occupies residues 714–734 (FTTGVVLGGYLAMMTVIFFWA). Over 735 to 759 (AYKTNFFPRVFGVSTLEKTATDDFR) the chain is Extracellular. A helical transmembrane segment spans residues 760–780 (KLASAIYLQVSTISQALIFVT). Residues 781 to 792 (RSRSWSFMERPG) are Cytoplasmic-facing. A helical membrane pass occupies residues 793-813 (LLLVVAFFIAQLVATLIAVYA). The Extracellular portion of the chain corresponds to 814 to 822 (NWSFAAIEG). A helical membrane pass occupies residues 823–843 (IGWGWAGVIWLYNIVFYIPLD). Residues 844 to 956 (LXXFLIRYAL…IETIQQAYTV (113 aa)) are Cytoplasmic-facing.

It belongs to the cation transport ATPase (P-type) (TC 3.A.3) family. Type IIIA subfamily. Expressed in roots, stems, leaves from both vegetative and flowering plants, and flowers at early and late stages of development with highest expression levels found in flowers and root tissue.

It is found in the cell membrane. The enzyme catalyses ATP + H2O + H(+)(in) = ADP + phosphate + 2 H(+)(out). In terms of biological role, the plasma membrane ATPase of plants and fungi is a hydrogen ion pump. The proton gradient it generates drives the active transport of nutrients by H(+)-symport. The resulting external acidification and/or internal alkinization may mediate growth responses. This Nicotiana plumbaginifolia (Leadwort-leaved tobacco) protein is Plasma membrane ATPase 3 (PMA3).